Consider the following 331-residue polypeptide: MKYHRPRRGSLAFSPRKRAKSIVPRIRAWPECDRVRMQGFAGYKAGMTHVVMIDDRKNSPTYGEEVVVPVTVIETPPMKVAAVRVYKKTQYGMQIAAEVWSNNLDDFLDRRLNLPKKEPDVEKLKAAVENGASEVRVVTYTQPYLITGVPKKVPDVMEHRIGGNVEEALDYAISKLGKEISVSEVFDEGAIIDVIAVTKGKGFQGPVKRWGVITLDAKHARSSKHRRVGNLGPWNPHHVRWTVPQAGQMGFHQRTEYNKRLIKIGENGEEITPKGGFLHYGVIRTQYVLVTGSVPGPVKRLIRMRDAIRPPKAHFDGVNIVYVSTTSKQGR.

This sequence belongs to the universal ribosomal protein uL3 family. In terms of assembly, part of the 50S ribosomal subunit. Forms a cluster with proteins L14 and L24e.

One of the primary rRNA binding proteins, it binds directly near the 3'-end of the 23S rRNA, where it nucleates assembly of the 50S subunit. The polypeptide is Large ribosomal subunit protein uL3 (Archaeoglobus fulgidus (strain ATCC 49558 / DSM 4304 / JCM 9628 / NBRC 100126 / VC-16)).